A 347-amino-acid chain; its full sequence is MAEQPVDLSDQALADAVSAVRRAFDGASTLEDLAKAKTEYLGDRSPIALARQALGSLPKTERADAGKRVNVARTEAQTAYDERLAVLRAERDAAVLVAERIDVTLPSTRQPVGARHPITILAERVADTFVAMGWELAEGPEVETEQFNFDALNFPPDHPARSEQDTFQVAPDGSRQVLRTHTSPVQIRALLERELPVYIVSIGRTFRTDELDATHTPVFHQVEGLAVDKGLTMANLRGTLDAFARSEFGPQGRTRFRPHFFPFTEPSAEVDIWFPDKKGGPGWVEWGGCGMVNPNVLRACGIDPEVYSGFAFGMGLERTLQFRNGIPDMRDMVEGDVRFSLPFGVGA.

Residue E265 participates in Mg(2+) binding.

This sequence belongs to the class-II aminoacyl-tRNA synthetase family. Phe-tRNA synthetase alpha subunit type 1 subfamily. Tetramer of two alpha and two beta subunits. Mg(2+) serves as cofactor.

The protein localises to the cytoplasm. The catalysed reaction is tRNA(Phe) + L-phenylalanine + ATP = L-phenylalanyl-tRNA(Phe) + AMP + diphosphate + H(+). The protein is Phenylalanine--tRNA ligase alpha subunit of Mycolicibacterium gilvum (strain PYR-GCK) (Mycobacterium gilvum (strain PYR-GCK)).